The primary structure comprises 338 residues: Lipoate-protein ligase A (338 aa).

A BPL/LPL catalytic domain is found at 29–216; the sequence is PATQRVLFLW…AFFAHYGERV (188 aa). Residues arginine 71, 76 to 79, and lysine 134 contribute to the ATP site; that span reads GAVF. Lysine 134 provides a ligand contact to (R)-lipoate.

Belongs to the LplA family. As to quaternary structure, monomer.

The protein localises to the cytoplasm. It catalyses the reaction L-lysyl-[lipoyl-carrier protein] + (R)-lipoate + ATP = N(6)-[(R)-lipoyl]-L-lysyl-[lipoyl-carrier protein] + AMP + diphosphate + H(+). The protein operates within protein modification; protein lipoylation via exogenous pathway; protein N(6)-(lipoyl)lysine from lipoate: step 1/2. It functions in the pathway protein modification; protein lipoylation via exogenous pathway; protein N(6)-(lipoyl)lysine from lipoate: step 2/2. Its function is as follows. Catalyzes both the ATP-dependent activation of exogenously supplied lipoate to lipoyl-AMP and the transfer of the activated lipoyl onto the lipoyl domains of lipoate-dependent enzymes. The polypeptide is Lipoate-protein ligase A (Escherichia coli O81 (strain ED1a)).